Here is a 406-residue protein sequence, read N- to C-terminus: 4-hydroxy-3-methylbut-2-en-1-yl diphosphate synthase (ferredoxin) (406 aa).

Residues Cys314, Cys317, Cys348, and Glu355 each coordinate [4Fe-4S] cluster.

Belongs to the IspG family. [4Fe-4S] cluster serves as cofactor.

The enzyme catalyses (2E)-4-hydroxy-3-methylbut-2-enyl diphosphate + 2 oxidized [2Fe-2S]-[ferredoxin] + H2O = 2-C-methyl-D-erythritol 2,4-cyclic diphosphate + 2 reduced [2Fe-2S]-[ferredoxin] + H(+). The protein operates within isoprenoid biosynthesis; isopentenyl diphosphate biosynthesis via DXP pathway; isopentenyl diphosphate from 1-deoxy-D-xylulose 5-phosphate: step 5/6. In terms of biological role, converts 2C-methyl-D-erythritol 2,4-cyclodiphosphate (ME-2,4cPP) into 1-hydroxy-2-methyl-2-(E)-butenyl 4-diphosphate. The polypeptide is 4-hydroxy-3-methylbut-2-en-1-yl diphosphate synthase (ferredoxin) (Prochlorococcus marinus (strain MIT 9313)).